The sequence spans 336 residues: Ketol-acid reductoisomerase (NADP(+)) 1 (336 aa).

Positions 2 to 181 (AKVYYEKDVT…GATRAGVLET (180 aa)) constitute a KARI N-terminal Rossmann domain. Residues 25 to 28 (YGSQ), Arg48, Ser52, and 82 to 85 (DELQ) each bind NADP(+). The active site involves His107. Residue Gly133 participates in NADP(+) binding. Residues 182 to 327 (TFKEETETDL…RKLREMMPFV (146 aa)) enclose the KARI C-terminal knotted domain. The Mg(2+) site is built by Asp190, Glu194, Glu226, and Glu230. A substrate-binding site is contributed by Ser251.

Belongs to the ketol-acid reductoisomerase family. Requires Mg(2+) as cofactor.

It carries out the reaction (2R)-2,3-dihydroxy-3-methylbutanoate + NADP(+) = (2S)-2-acetolactate + NADPH + H(+). It catalyses the reaction (2R,3R)-2,3-dihydroxy-3-methylpentanoate + NADP(+) = (S)-2-ethyl-2-hydroxy-3-oxobutanoate + NADPH + H(+). Its pathway is amino-acid biosynthesis; L-isoleucine biosynthesis; L-isoleucine from 2-oxobutanoate: step 2/4. It participates in amino-acid biosynthesis; L-valine biosynthesis; L-valine from pyruvate: step 2/4. Functionally, involved in the biosynthesis of branched-chain amino acids (BCAA). Catalyzes an alkyl-migration followed by a ketol-acid reduction of (S)-2-acetolactate (S2AL) to yield (R)-2,3-dihydroxy-isovalerate. In the isomerase reaction, S2AL is rearranged via a Mg-dependent methyl migration to produce 3-hydroxy-3-methyl-2-ketobutyrate (HMKB). In the reductase reaction, this 2-ketoacid undergoes a metal-dependent reduction by NADPH to yield (R)-2,3-dihydroxy-isovalerate. The chain is Ketol-acid reductoisomerase (NADP(+)) 1 from Bacillus cereus (strain ATCC 10987 / NRS 248).